A 312-amino-acid chain; its full sequence is MEAQQIISRFCPKSSLAPSIPMVKQPFSLNFPPLHSLSSYPFLQSQNLGFPTGALHAISFVHKEVCSSSWRIWCSKSSSSTAEPEEDHEVRAQVTVRRKKLAVFVSGGGSNFRSIHEASKKGSLHGDVTVLVTNKSECGGAQYARNNGIPVILFPKAKDEPKGLSPCDLVDTLRKFEVDFVLLAGYLKLIPVELIRAFERSIFNIHPSLLPAFGGKGYYGMKVHKAVIASGARFSGPTIHFVDEHYDTGRILAQRVVPVLANDTAEELAARVLNEEHQLYVEVVEALCEERIVWRKDGVPLIQSRENPNEFL.

The N-terminal 73 residues, 1-73 (MEAQQIISRF…EVCSSSWRIW (73 aa)), are a transit peptide targeting the chloroplast. N(1)-(5-phospho-beta-D-ribosyl)glycinamide is bound at residue 109–111 (GSN). (6R)-10-formyltetrahydrofolate contacts are provided by residues Lys162, 187–190 (LKLI), and Asn204. The active-site Proton donor is His206. A (6R)-10-formyltetrahydrofolate-binding site is contributed by Asp247. Glu276 is a N(1)-(5-phospho-beta-D-ribosyl)glycinamide binding site.

It belongs to the GART family.

It is found in the plastid. The protein localises to the chloroplast. It catalyses the reaction N(1)-(5-phospho-beta-D-ribosyl)glycinamide + (6R)-10-formyltetrahydrofolate = N(2)-formyl-N(1)-(5-phospho-beta-D-ribosyl)glycinamide + (6S)-5,6,7,8-tetrahydrofolate + H(+). Its pathway is purine metabolism; IMP biosynthesis via de novo pathway; N(2)-formyl-N(1)-(5-phospho-D-ribosyl)glycinamide from N(1)-(5-phospho-D-ribosyl)glycinamide (10-formyl THF route): step 1/1. The protein is Phosphoribosylglycinamide formyltransferase, chloroplastic (PUR3) of Vigna unguiculata (Cowpea).